Here is a 153-residue protein sequence, read N- to C-terminus: Transcriptional repressor NrdR (153 aa).

Residues 3–34 (CPSCFHNGTRVLDSRPVDEGRSIRRRRECESC) fold into a zinc finger. The ATP-cone domain occupies 49–139 (LIVVKKEGTR…VYRQFKDLNV (91 aa)).

This sequence belongs to the NrdR family. The cofactor is Zn(2+).

In terms of biological role, negatively regulates transcription of bacterial ribonucleotide reductase nrd genes and operons by binding to NrdR-boxes. This chain is Transcriptional repressor NrdR, found in Bacillus cytotoxicus (strain DSM 22905 / CIP 110041 / 391-98 / NVH 391-98).